The chain runs to 649 residues: Threonine--tRNA ligase (649 aa).

The TGS domain occupies 1 to 61; that stretch reads MIKITFPDGA…TQDGSIEIVT (61 aa). The segment at 242–540 is catalytic; the sequence is DHRKLGKELD…LIETYKGAFP (299 aa). 3 residues coordinate Zn(2+): cysteine 336, histidine 387, and histidine 517.

The protein belongs to the class-II aminoacyl-tRNA synthetase family. In terms of assembly, homodimer. Requires Zn(2+) as cofactor.

It is found in the cytoplasm. The catalysed reaction is tRNA(Thr) + L-threonine + ATP = L-threonyl-tRNA(Thr) + AMP + diphosphate + H(+). Catalyzes the attachment of threonine to tRNA(Thr) in a two-step reaction: L-threonine is first activated by ATP to form Thr-AMP and then transferred to the acceptor end of tRNA(Thr). Also edits incorrectly charged L-seryl-tRNA(Thr). This Streptococcus mutans serotype c (strain ATCC 700610 / UA159) protein is Threonine--tRNA ligase.